The primary structure comprises 215 residues: UPF0502 protein YceH (215 aa).

The protein belongs to the UPF0502 family.

The sequence is that of UPF0502 protein YceH from Salmonella schwarzengrund (strain CVM19633).